The chain runs to 196 residues: Glycerol-3-phosphate acyltransferase (196 aa).

4 helical membrane-spanning segments follow: residues 5–25 (GLIA…MILT), 70–90 (VVIA…LGAF), 111–131 (IGVL…IWLL), and 152–172 (LLLW…LTVL).

The protein belongs to the PlsY family. Probably interacts with PlsX.

The protein localises to the cell inner membrane. It catalyses the reaction an acyl phosphate + sn-glycerol 3-phosphate = a 1-acyl-sn-glycero-3-phosphate + phosphate. It functions in the pathway lipid metabolism; phospholipid metabolism. Catalyzes the transfer of an acyl group from acyl-phosphate (acyl-PO(4)) to glycerol-3-phosphate (G3P) to form lysophosphatidic acid (LPA). This enzyme utilizes acyl-phosphate as fatty acyl donor, but not acyl-CoA or acyl-ACP. The polypeptide is Glycerol-3-phosphate acyltransferase (Nitrobacter winogradskyi (strain ATCC 25391 / DSM 10237 / CIP 104748 / NCIMB 11846 / Nb-255)).